We begin with the raw amino-acid sequence, 165 residues long: Austinoid biosynthesis cluster protein J (165 aa).

This sequence belongs to the trt14 isomerase family. In terms of assembly, homodimer.

The protein operates within secondary metabolite biosynthesis; terpenoid biosynthesis. Part of the gene cluster that mediates the biosynthesis of calidodehydroaustin, a fungal meroterpenoid. The first step of the pathway is the synthesis of 3,5-dimethylorsellinic acid by the polyketide synthase ausA. 3,5-dimethylorsellinic acid is then prenylated by the polyprenyl transferase ausN. Further epoxidation by the FAD-dependent monooxygenase ausM and cyclization by the probable terpene cyclase ausL lead to the formation of protoaustinoid A. Protoaustinoid A is then oxidized to spiro-lactone preaustinoid A3 by the combined action of the FAD-binding monooxygenases ausB and ausC, and the dioxygenase ausE. Acid-catalyzed keto-rearrangement and ring contraction of the tetraketide portion of preaustinoid A3 by ausJ lead to the formation of preaustinoid A4. The aldo-keto reductase ausK, with the help of ausH, is involved in the next step by transforming preaustinoid A4 into isoaustinone which is in turn hydroxylated by the P450 monooxygenase ausI to form austinolide. The cytochrome P450 monooxygenase ausG modifies austinolide to austinol. Austinol is further acetylated to austin by the O-acetyltransferase ausP, which spontaneously changes to dehydroaustin. The cytochrome P450 monooxygenase ausR then converts dehydroaustin is into 7-dehydrodehydroaustin. The hydroxylation catalyzed by ausR permits the O-acetyltransferase ausQ to add an additional acetyl group to the molecule, leading to the formation of acetoxydehydroaustin. The short chain dehydrogenase ausT catalyzes the reduction of the double bond present between carbon atoms 1 and 2 to convert 7-dehydrodehydroaustin into 1,2-dihydro-7-hydroxydehydroaustin. AusQ catalyzes not only an acetylation reaction but also the addition of the PKS ausV diketide product to 1,2-dihydro-7-hydroxydehydroaustin, forming precalidodehydroaustin. Finally, the iron/alpha-ketoglutarate-dependent dioxygenase converts precalidodehydroaustin into calidodehydroaustin. This Aspergillus calidoustus protein is Austinoid biosynthesis cluster protein J.